Reading from the N-terminus, the 145-residue chain is 3-hydroxyacyl-[acyl-carrier-protein] dehydratase FabZ (145 aa).

Residue His47 is part of the active site.

The protein belongs to the thioester dehydratase family. FabZ subfamily.

The protein resides in the cytoplasm. It catalyses the reaction a (3R)-hydroxyacyl-[ACP] = a (2E)-enoyl-[ACP] + H2O. Functionally, involved in unsaturated fatty acids biosynthesis. Catalyzes the dehydration of short chain beta-hydroxyacyl-ACPs and long chain saturated and unsaturated beta-hydroxyacyl-ACPs. This Polaromonas sp. (strain JS666 / ATCC BAA-500) protein is 3-hydroxyacyl-[acyl-carrier-protein] dehydratase FabZ.